The primary structure comprises 50 residues: Protein hunchback (50 aa).

3 consecutive C2H2-type zinc fingers follow at residues 1 to 5 (HLRNH), 11 to 33 (FKCNKCNYACVNKSMLNSHMKSH), and 39 to 50 (YRCADCTYATKY).

It belongs to the hunchback C2H2-type zinc-finger protein family.

Its subcellular location is the nucleus. In terms of biological role, gap class segmentation protein that controls development of head structures. The polypeptide is Protein hunchback (hb) (Platynereis dumerilii (Dumeril's clam worm)).